A 314-amino-acid polypeptide reads, in one-letter code: Olfactory receptor 5P6 (314 aa).

Residues 1–28 are Extracellular-facing; it reads MAFQEDGNHTAVTEFVLFGLTDDPVLRV. A glycan (N-linked (GlcNAc...) asparagine) is linked at Asn8. A helical membrane pass occupies residues 29 to 49; the sequence is ILFIIFLCIYLVTVSGNLSTI. Over 50–57 the chain is Cytoplasmic; that stretch reads LLIRVSSQ. Residues 58 to 78 traverse the membrane as a helical segment; sequence LHHPMYFFLSHLAFADIGYSS. Over 79 to 102 the chain is Extracellular; that stretch reads SVTPNMLVNFLVERHTISYIGCAI. A disulfide bridge links Cys100 with Cys192. A helical membrane pass occupies residues 103 to 123; sequence QLGSVVFFGSSECFILAAMAY. The Cytoplasmic segment spans residues 124–136; the sequence is DRFMAICNPLLYS. A helical transmembrane segment spans residues 137-157; that stretch reads TKMSTQVCVQLLLIAYIGGFL. Residues 158–199 are Extracellular-facing; the sequence is NTWSFTICFYSLVFCGPNGVNHFFCDFAPLIELSCSDVSVPA. A helical membrane pass occupies residues 200-220; it reads TVPSFTAGSIIVVTVIVIAIS. Residues 221-240 lie on the Cytoplasmic side of the membrane; it reads YIYILITILKMHSTEGRQKA. A helical transmembrane segment spans residues 241 to 261; sequence FSTCTSHLTAVTLFYGTITFI. Residues 262–274 lie on the Extracellular side of the membrane; that stretch reads YVMPKSSFSTDQN. A helical transmembrane segment spans residues 275–295; the sequence is KVVSVFYMVVIPMLNPLIYSL. The Cytoplasmic portion of the chain corresponds to 296–314; the sequence is RNNEIKGALKRQIGRKIFS.

Belongs to the G-protein coupled receptor 1 family.

It is found in the cell membrane. Potential odorant receptor. This is Olfactory receptor 5P6 from Mus musculus (Mouse).